The following is a 253-amino-acid chain: uncharacterized protein (253 aa).

A signal peptide spans 1 to 19; sequence MHYLKKVTIYISLLILVSG. Residue C20 is the site of N-palmitoyl cysteine attachment. A lipid anchor (S-diacylglycerol cysteine) is attached at C20.

The protein belongs to the staphylococcal tandem lipoprotein family.

The protein localises to the cell membrane. This is an uncharacterized protein from Staphylococcus epidermidis (strain ATCC 35984 / DSM 28319 / BCRC 17069 / CCUG 31568 / BM 3577 / RP62A).